Here is a 171-residue protein sequence, read N- to C-terminus: NRR repressor homolog 2 (171 aa).

A compositionally biased stretch (basic and acidic residues) spans 1–12 (MEARLSTGEKTK). Disordered regions lie at residues 1-45 (MEAR…QQQM), 65-94 (AALP…APWR), and 119-143 (TTKG…EEDK). The span at 26 to 43 (PEEETAAETTTSEEEEQQ) shows a compositional bias: acidic residues.

The protein belongs to the NPR1-interactor family. In terms of assembly, interacts with NPR1/NH1. Interacts with NPR3/NH3.

The protein localises to the nucleus. Binds to and weakly represses NPR1/NH1-mediated transcriptional activation of LG2 in vitro. The polypeptide is NRR repressor homolog 2 (Oryza sativa subsp. japonica (Rice)).